Reading from the N-terminus, the 419-residue chain is Queuine tRNA-ribosyltransferase accessory subunit 2 (419 aa).

Residues Cys326, Cys328, Cys331, and His357 each contribute to the Zn(2+) site.

The protein belongs to the queuine tRNA-ribosyltransferase family. QTRT2 subfamily. As to quaternary structure, heterodimer of a catalytic subunit and an accessory subunit. Zn(2+) is required as a cofactor.

It is found in the cytoplasm. Non-catalytic subunit of the queuine tRNA-ribosyltransferase (TGT) that catalyzes the base-exchange of a guanine (G) residue with queuine (Q) at position 34 (anticodon wobble position) in tRNAs with GU(N) anticodons (tRNA-Asp, -Asn, -His and -Tyr), resulting in the hypermodified nucleoside queuosine (7-(((4,5-cis-dihydroxy-2-cyclopenten-1-yl)amino)methyl)-7-deazaguanosine). The chain is Queuine tRNA-ribosyltransferase accessory subunit 2 from Drosophila grimshawi (Hawaiian fruit fly).